Here is a 434-residue protein sequence, read N- to C-terminus: Glutamate-1-semialdehyde 2,1-aminomutase (434 aa).

An N6-(pyridoxal phosphate)lysine modification is found at Lys266.

The protein belongs to the class-III pyridoxal-phosphate-dependent aminotransferase family. HemL subfamily. In terms of assembly, homodimer. The cofactor is pyridoxal 5'-phosphate.

It localises to the cytoplasm. The catalysed reaction is (S)-4-amino-5-oxopentanoate = 5-aminolevulinate. Its pathway is porphyrin-containing compound metabolism; protoporphyrin-IX biosynthesis; 5-aminolevulinate from L-glutamyl-tRNA(Glu): step 2/2. This chain is Glutamate-1-semialdehyde 2,1-aminomutase, found in Psychrobacter sp. (strain PRwf-1).